Reading from the N-terminus, the 233-residue chain is Antiholin-like protein LrgB (233 aa).

Transmembrane regions (helical) follow at residues 9–29, 34–54, 63–83, 97–117, 121–141, 144–164, and 212–232; these read TPYFGILLSVIPFFLATILFE, FFLFAPLFVSMVFGVAFLYLT, IGGDIIYFFLEPATICFAIPL, IIGGIGIGTVVALLIILTFAK, FANDVILSMLPQAATTAIALP, AGIGGIKELTSLAVILNGVII, and IALVLVGVVVVAVVPVFVAIF.

The protein belongs to the CidB/LrgB family. LrgB subfamily.

The protein localises to the cell membrane. Its function is as follows. Inhibits the expression or activity of extracellular murein hydrolases by interacting, possibly with LrgA, with the holin-like proteins CidA and/or CidB. The LrgAB and CidAB proteins may affect the proton motive force of the membrane. May be involved in programmed cell death (PCD), possibly triggering PCD in response to antibiotics and environmental stresses. This Staphylococcus aureus (strain Mu3 / ATCC 700698) protein is Antiholin-like protein LrgB.